The sequence spans 101 residues: Acylphosphatase (101 aa).

The region spanning 13-101 is the Acylphosphatase-like domain; sequence RARILVRGVV…GEFRGFEIRY (89 aa). Active-site residues include R28 and N46.

Belongs to the acylphosphatase family.

It catalyses the reaction an acyl phosphate + H2O = a carboxylate + phosphate + H(+). The sequence is that of Acylphosphatase (acyP) from Aeropyrum pernix (strain ATCC 700893 / DSM 11879 / JCM 9820 / NBRC 100138 / K1).